The following is a 156-amino-acid chain: MPRRGPVTPREIPPDPVYNSVLVQKLINKVMLDGKKSIAEKIVYGAMDIIREKTKQDPLTVLEKAVQNVTPLLEVRPRRVGGATYQVPIEVPPRRGLSLALRWIVRAARERKGMPMKERLALEILDAFNNTGGAIKKRDEMHRMAEANKAFAHYRW.

This sequence belongs to the universal ribosomal protein uS7 family. As to quaternary structure, part of the 30S ribosomal subunit. Contacts proteins S9 and S11.

One of the primary rRNA binding proteins, it binds directly to 16S rRNA where it nucleates assembly of the head domain of the 30S subunit. Is located at the subunit interface close to the decoding center, probably blocks exit of the E-site tRNA. This Dictyoglomus turgidum (strain DSM 6724 / Z-1310) protein is Small ribosomal subunit protein uS7.